Here is a 404-residue protein sequence, read N- to C-terminus: Exodeoxyribonuclease 7 large subunit (404 aa).

This sequence belongs to the XseA family. Heterooligomer composed of large and small subunits.

The protein localises to the cytoplasm. It carries out the reaction Exonucleolytic cleavage in either 5'- to 3'- or 3'- to 5'-direction to yield nucleoside 5'-phosphates.. Its function is as follows. Bidirectionally degrades single-stranded DNA into large acid-insoluble oligonucleotides, which are then degraded further into small acid-soluble oligonucleotides. The polypeptide is Exodeoxyribonuclease 7 large subunit (Tropheryma whipplei (strain TW08/27) (Whipple's bacillus)).